Reading from the N-terminus, the 59-residue chain is Large ribosomal subunit protein uL30 (59 aa).

This sequence belongs to the universal ribosomal protein uL30 family. As to quaternary structure, part of the 50S ribosomal subunit.

The sequence is that of Large ribosomal subunit protein uL30 from Buchnera aphidicola subsp. Schizaphis graminum (strain Sg).